The sequence spans 492 residues: Protein PAIR1 (492 aa).

Residues 166-186 (VDSVQSDVMQLNRAMKEASLD) are a coiled coil. The Nuclear localization signal signature appears at 479–483 (KRRRR).

In terms of assembly, interacts with CRC1. Expressed in reproductive organs, but not in vegetative organs.

It localises to the nucleus. Functionally, involved in spore formation. Plays an essential role in the establishment of homologous chromosome pairing in early meiosis. The chain is Protein PAIR1 (PAIR1) from Oryza sativa subsp. japonica (Rice).